Consider the following 268-residue polypeptide: Tryptophan synthase alpha chain (268 aa).

Active-site proton acceptor residues include E49 and D60.

It belongs to the TrpA family. As to quaternary structure, tetramer of two alpha and two beta chains.

It catalyses the reaction (1S,2R)-1-C-(indol-3-yl)glycerol 3-phosphate + L-serine = D-glyceraldehyde 3-phosphate + L-tryptophan + H2O. It functions in the pathway amino-acid biosynthesis; L-tryptophan biosynthesis; L-tryptophan from chorismate: step 5/5. Functionally, the alpha subunit is responsible for the aldol cleavage of indoleglycerol phosphate to indole and glyceraldehyde 3-phosphate. This is Tryptophan synthase alpha chain from Escherichia coli O7:K1 (strain IAI39 / ExPEC).